The sequence spans 79 residues: Acyl carrier protein (79 aa).

Residues 2–77 (SEVAEKVKKI…DAIDYIEKKK (76 aa)) form the Carrier domain. Residue Ser-37 is modified to O-(pantetheine 4'-phosphoryl)serine.

Belongs to the acyl carrier protein (ACP) family. In terms of processing, 4'-phosphopantetheine is transferred from CoA to a specific serine of apo-ACP by AcpS. This modification is essential for activity because fatty acids are bound in thioester linkage to the sulfhydryl of the prosthetic group.

The protein resides in the cytoplasm. It functions in the pathway lipid metabolism; fatty acid biosynthesis. Carrier of the growing fatty acid chain in fatty acid biosynthesis. The polypeptide is Acyl carrier protein (Acidiphilium cryptum (strain JF-5)).